A 264-amino-acid polypeptide reads, in one-letter code: Thymidylate synthase (264 aa).

DUMP is bound at residue Arg-21. A (6R)-5,10-methylene-5,6,7,8-tetrahydrofolate-binding site is contributed by His-51. Residue 126–127 (RR) coordinates dUMP. The Nucleophile role is filled by Cys-146. DUMP-binding positions include 166–169 (RSCD), Asn-177, and 207–209 (HLY). Asp-169 contributes to the (6R)-5,10-methylene-5,6,7,8-tetrahydrofolate binding site. Ala-263 is a (6R)-5,10-methylene-5,6,7,8-tetrahydrofolate binding site.

It belongs to the thymidylate synthase family. Bacterial-type ThyA subfamily. Homodimer.

It is found in the cytoplasm. The enzyme catalyses dUMP + (6R)-5,10-methylene-5,6,7,8-tetrahydrofolate = 7,8-dihydrofolate + dTMP. Its pathway is pyrimidine metabolism; dTTP biosynthesis. In terms of biological role, catalyzes the reductive methylation of 2'-deoxyuridine-5'-monophosphate (dUMP) to 2'-deoxythymidine-5'-monophosphate (dTMP) while utilizing 5,10-methylenetetrahydrofolate (mTHF) as the methyl donor and reductant in the reaction, yielding dihydrofolate (DHF) as a by-product. This enzymatic reaction provides an intracellular de novo source of dTMP, an essential precursor for DNA biosynthesis. This chain is Thymidylate synthase, found in Hamiltonella defensa subsp. Acyrthosiphon pisum (strain 5AT).